The chain runs to 446 residues: Bifunctional protein GlmU (446 aa).

The segment at 1–229 (MTEKPVALIV…EAETLGINTR (229 aa)) is pyrophosphorylase. UDP-N-acetyl-alpha-D-glucosamine-binding positions include 11–14 (LAAG), Lys25, Gln78, 83–84 (GT), 106–108 (YGD), Gly141, Glu155, Asn170, and Asn227. Position 108 (Asp108) interacts with Mg(2+). Asn227 serves as a coordination point for Mg(2+). A linker region spans residues 230–250 (AELAAAEAAFQVRARARALED). The tract at residues 251-446 (GVTMTDPATV…MQALRQKKGN (196 aa)) is N-acetyltransferase. UDP-N-acetyl-alpha-D-glucosamine contacts are provided by Arg316 and Lys334. His346 serves as the catalytic Proton acceptor. 2 residues coordinate UDP-N-acetyl-alpha-D-glucosamine: Tyr349 and Asn360. Acetyl-CoA-binding positions include Ala363, 369–370 (NY), Ser388, Ser406, and Arg423.

This sequence in the N-terminal section; belongs to the N-acetylglucosamine-1-phosphate uridyltransferase family. In the C-terminal section; belongs to the transferase hexapeptide repeat family. As to quaternary structure, homotrimer. Requires Mg(2+) as cofactor.

It localises to the cytoplasm. It catalyses the reaction alpha-D-glucosamine 1-phosphate + acetyl-CoA = N-acetyl-alpha-D-glucosamine 1-phosphate + CoA + H(+). The enzyme catalyses N-acetyl-alpha-D-glucosamine 1-phosphate + UTP + H(+) = UDP-N-acetyl-alpha-D-glucosamine + diphosphate. It participates in nucleotide-sugar biosynthesis; UDP-N-acetyl-alpha-D-glucosamine biosynthesis; N-acetyl-alpha-D-glucosamine 1-phosphate from alpha-D-glucosamine 6-phosphate (route II): step 2/2. It functions in the pathway nucleotide-sugar biosynthesis; UDP-N-acetyl-alpha-D-glucosamine biosynthesis; UDP-N-acetyl-alpha-D-glucosamine from N-acetyl-alpha-D-glucosamine 1-phosphate: step 1/1. The protein operates within bacterial outer membrane biogenesis; LPS lipid A biosynthesis. Functionally, catalyzes the last two sequential reactions in the de novo biosynthetic pathway for UDP-N-acetylglucosamine (UDP-GlcNAc). The C-terminal domain catalyzes the transfer of acetyl group from acetyl coenzyme A to glucosamine-1-phosphate (GlcN-1-P) to produce N-acetylglucosamine-1-phosphate (GlcNAc-1-P), which is converted into UDP-GlcNAc by the transfer of uridine 5-monophosphate (from uridine 5-triphosphate), a reaction catalyzed by the N-terminal domain. This is Bifunctional protein GlmU from Paracoccus denitrificans (strain Pd 1222).